Reading from the N-terminus, the 196-residue chain is uncharacterized protein (196 aa).

Residues 22-42 (MIIIPMALLVFILIIGSFFAI) form a helical membrane-spanning segment.

It localises to the cell membrane. This is an uncharacterized protein from Lactobacillus acidophilus (strain ATCC 700396 / NCK56 / N2 / NCFM).